A 101-amino-acid chain; its full sequence is Urease subunit beta (101 aa).

It belongs to the urease beta subunit family. In terms of assembly, heterotrimer of UreA (gamma), UreB (beta) and UreC (alpha) subunits. Three heterotrimers associate to form the active enzyme.

It is found in the cytoplasm. The catalysed reaction is urea + 2 H2O + H(+) = hydrogencarbonate + 2 NH4(+). It participates in nitrogen metabolism; urea degradation; CO(2) and NH(3) from urea (urease route): step 1/1. The polypeptide is Urease subunit beta (Variovorax paradoxus (strain S110)).